The sequence spans 826 residues: MDESALLDLLECPVCLERLDASAKVLPCQHTFCKRCLLGIVSSRKELRCPECRTLVECGVDELPSNILLVRLLDGIRQRPRKAGDGGSAGNSTNALRAQGSVTTNGGLNDAQNTQSGQQRIQARSPPVRGVPQLPCAKALYNYEGKEPGDLKFNKGDIIVLRRQVDENWYHGEINGIHGFFPTNFVQIIKPLPQPPPQCKALYDFEVKDKEADKDCLPFLKDDILTVIRRVDENWAEGMLGDKIGIFPISYVEFNSAAKQLIELDKPSGADTGEGSSGTSHSGNSQKQADAKKNTKKRHSFTSLTMSNKSSQSVQNRHSMEISPPVLISSSNPTAAARISELTGLSCSAPSQDMNPPLLPPPPMATPVITSASSGAAAVAQRNIIGPVEQVPHLRTSARPSVFIAIYPYIPRKEDELELRKGEMFLVFERCQDGWFKGTSMHTSKIGVFPGNYVAPVTRALTTATPAKVAMATATTSNVVNLVTPTPPGAPCQKLPVSGVEFAKTSSTNGVSPAGVPGCHIQTSPQSKVLLHMSGQMTVNQARNAVRTAAAHSQDRPTAAVTPIQAQTPAASALPQQAAASQQVPPPLSAPAAYINAAMNISRPSVPAASAASSALPTAAFEAESSWKSSSGLSGCSFSENVSAPLNSAANKQDKDSKKEKKGLLKLLSGASTKRKPRSSPPHSPTQEVEQTNSEAAAALEGAVGPDIVPVIVNGRAAPCTVDCDSVSASTPAQDNRKPASLDNNIPIAPPPRQPCSSLGSVLNDSRPCERYRVMVSYPPQSEAELELKEGDIVFVHKKREDGWFKGTLQRNGKTGLFPGSFVENI.

An RING-type zinc finger spans residues 12 to 53 (CPVCLERLDASAKVLPCQHTFCKRCLLGIVSSRKELRCPECR). The disordered stretch occupies residues 80–130 (PRKAGDGGSAGNSTNALRAQGSVTTNGGLNDAQNTQSGQQRIQARSPPVRG). Over residues 90–122 (GNSTNALRAQGSVTTNGGLNDAQNTQSGQQRIQ) the composition is skewed to polar residues. 2 SH3 domains span residues 132-191 (PQLP…IIKP) and 194-257 (QPPP…FNSA). The segment at 266–319 (KPSGADTGEGSSGTSHSGNSQKQADAKKNTKKRHSFTSLTMSNKSSQSVQNRHS) is disordered. Positions 273-285 (GEGSSGTSHSGNS) are enriched in low complexity. Residues 301–317 (FTSLTMSNKSSQSVQNR) are compositionally biased toward polar residues. In terms of domain architecture, SH3 3 spans 398–459 (ARPSVFIAIY…PGNYVAPVTR (62 aa)). 2 disordered regions span residues 647 to 694 (NSAA…QTNS) and 725 to 759 (DSVS…CSSL). Residues 652–663 (KQDKDSKKEKKG) are compositionally biased toward basic and acidic residues. One can recognise an SH3 4 domain in the interval 767–826 (RPCERYRVMVSYPPQSEAELELKEGDIVFVHKKREDGWFKGTLQRNGKTGLFPGSFVENI).

This sequence belongs to the SH3RF family. In terms of processing, autoubiquitinated. Ubiquitinated by SH3RF2, leading to proteasome-mediated degradation.

The protein resides in the cytoplasm. It is found in the perinuclear region. It localises to the cell projection. Its subcellular location is the lamellipodium. The protein localises to the golgi apparatus. The protein resides in the trans-Golgi network. It carries out the reaction S-ubiquitinyl-[E2 ubiquitin-conjugating enzyme]-L-cysteine + [acceptor protein]-L-lysine = [E2 ubiquitin-conjugating enzyme]-L-cysteine + N(6)-ubiquitinyl-[acceptor protein]-L-lysine.. Its pathway is protein modification; protein ubiquitination. Has E3 ubiquitin-protein ligase activity. In the absence of an external substrate, it can catalyze self-ubiquitination. Acts as a scaffold protein that contributes to the effective activation of the JNK signaling pathway. Plays an essential role in the anterior neural development. This chain is E3 ubiquitin-protein ligase SH3RF1 (sh3rf1), found in Xenopus laevis (African clawed frog).